The primary structure comprises 449 residues: 23S rRNA (uracil(1939)-C(5))-methyltransferase RlmD (449 aa).

Residues serine 12–lysine 70 form the TRAM domain. [4Fe-4S] cluster contacts are provided by cysteine 83, cysteine 89, cysteine 92, and cysteine 170. Glutamine 282, phenylalanine 311, asparagine 316, glutamate 332, aspartate 359, and aspartate 379 together coordinate S-adenosyl-L-methionine. The active-site Nucleophile is the cysteine 405.

This sequence belongs to the class I-like SAM-binding methyltransferase superfamily. RNA M5U methyltransferase family. RlmD subfamily.

The enzyme catalyses uridine(1939) in 23S rRNA + S-adenosyl-L-methionine = 5-methyluridine(1939) in 23S rRNA + S-adenosyl-L-homocysteine + H(+). In terms of biological role, catalyzes the formation of 5-methyl-uridine at position 1939 (m5U1939) in 23S rRNA. This chain is 23S rRNA (uracil(1939)-C(5))-methyltransferase RlmD, found in Shewanella sp. (strain MR-4).